A 383-amino-acid polypeptide reads, in one-letter code: ATP phosphoribosyltransferase regulatory subunit (383 aa).

It belongs to the class-II aminoacyl-tRNA synthetase family. HisZ subfamily. Heteromultimer composed of HisG and HisZ subunits.

The protein resides in the cytoplasm. It functions in the pathway amino-acid biosynthesis; L-histidine biosynthesis; L-histidine from 5-phospho-alpha-D-ribose 1-diphosphate: step 1/9. Required for the first step of histidine biosynthesis. May allow the feedback regulation of ATP phosphoribosyltransferase activity by histidine. The protein is ATP phosphoribosyltransferase regulatory subunit of Paraburkholderia phytofirmans (strain DSM 17436 / LMG 22146 / PsJN) (Burkholderia phytofirmans).